The sequence spans 61 residues: Cobrotoxin-c (61 aa).

4 disulfide bridges follow: cysteine 3–cysteine 23, cysteine 17–cysteine 40, cysteine 42–cysteine 53, and cysteine 54–cysteine 59.

It belongs to the three-finger toxin family. Short-chain subfamily. Type I alpha-neurotoxin sub-subfamily. Expressed by the venom gland.

The protein localises to the secreted. Functionally, produces peripheral paralysis by blocking neuromuscular transmission at the postsynaptic site. Binds to the nicotinic acetylcholine receptor. This Naja kaouthia (Monocled cobra) protein is Cobrotoxin-c.